Here is a 229-residue protein sequence, read N- to C-terminus: Translation initiation factor IF-3 (229 aa).

Disordered regions lie at residues 1-21 and 184-229; these read MAIQ…TNRR and QAQR…AGPR. The segment covering 192–203 has biased composition (low complexity); it reads AAAQAAPAAAPQ. A compositionally biased stretch (pro residues) spans 204–221; it reads PGAPAAPPAAPAPAPAPE.

The protein belongs to the IF-3 family. In terms of assembly, monomer.

Its subcellular location is the cytoplasm. In terms of biological role, IF-3 binds to the 30S ribosomal subunit and shifts the equilibrium between 70S ribosomes and their 50S and 30S subunits in favor of the free subunits, thus enhancing the availability of 30S subunits on which protein synthesis initiation begins. The sequence is that of Translation initiation factor IF-3 from Anaeromyxobacter sp. (strain Fw109-5).